We begin with the raw amino-acid sequence, 765 residues long: MKWLCSVGIAVSLALQPALADDLFGNHPLTPEARDAFVTELLKKMTVDEKIGQLRLISVGPDNPKEAIREMIKDGQVGAIFNTVTRQDIRAMQDQVMELSRLKIPLFFAYDVLHGQRTVFPISLGLASSFNLDAVKTVGRVSAYEAADDGLNMTWAPMVDVSRDPRWGRASEGFGEDTYLTSTMGKTMVEAMQGKSPADRYSVMTSVKHFAAYGAVEGGKEYNTVDMSPQRLFNDYMPPYKAGLDAGSGAVMVALNSLNGTPATSDSWLLKDVLRDQWGFKGITVSDHGAIKELIKHGTAADPEDAVRVALKSGINMSMSDEYYSKYLPGLIKSGKVTMAELDDAARHVLNVKYDMGLFNDPYSHLGPKESDPVDTNAESRLHRKEAREVARESLVLLKNRLETLPLKKSATIAVVGPLADSKRDVMGSWSAAGVADQSVTVLTGIKNAVGENGKVLYAKGANVTSDKGIIDFLNQYEEAVKVDPRSPQEMIDEAVQTAKQSDVVVAVVGEAQGMAHEASSRTDITIPQSQRDLIAALKATGKPLVLVLMNGRPLALVKEDQQADAILETWFAGTEGGNAIADVLFGDYNPSGKLPMSFPRSVGQIPVYYSHLNTGRPYNADKPNKYTSRYFDEANGALYPFGYGLSYTTFTVSDVKLSAPTMKRDGKVTASVQVTNTGKREGATVVQMYLQDVTASMSRPVKQLKGFEKITLKPGETQTVSFPIDIEALKFWNQQMKYDAEPGKFNVFIGTDSARVKKGEFELL.

A signal peptide spans 1 to 20 (MKWLCSVGIAVSLALQPALA). The active site involves aspartate 287.

It belongs to the glycosyl hydrolase 3 family.

It localises to the periplasm. It catalyses the reaction Hydrolysis of terminal, non-reducing beta-D-glucosyl residues with release of beta-D-glucose.. The sequence is that of Periplasmic beta-glucosidase (bglX) from Escherichia coli (strain K12).